The following is a 286-amino-acid chain: Beta-glucanase (286 aa).

A signal peptide spans 1-30; sequence MCTMPLMKLKKMMRRTAFLLSVLIGCSMLG. A GH16 domain is found at 48–286; the sequence is FDYSGLPDPE…DYVRVYRWVE (239 aa). Glutamate 158 serves as the catalytic Nucleophile. The Proton donor role is filled by glutamate 163.

The protein belongs to the glycosyl hydrolase 16 family.

The enzyme catalyses Hydrolysis of (1-&gt;4)-beta-D-glucosidic linkages in beta-D-glucans containing (1-&gt;3)- and (1-&gt;4)-bonds.. Functionally, shows activity on lichenan, beta-glucan and laminarin but not on CMC cellulose or xylan. The sequence is that of Beta-glucanase (bglA) from Rhodothermus marinus (Rhodothermus obamensis).